We begin with the raw amino-acid sequence, 78 residues long: Acyl carrier protein (78 aa).

One can recognise a Carrier domain in the interval 1-76 (MALFEDIQAV…DVVKYIEDNK (76 aa)). Ser36 bears the O-(pantetheine 4'-phosphoryl)serine mark.

Belongs to the acyl carrier protein (ACP) family. 4'-phosphopantetheine is transferred from CoA to a specific serine of apo-ACP by AcpS. This modification is essential for activity because fatty acids are bound in thioester linkage to the sulfhydryl of the prosthetic group.

Its subcellular location is the cytoplasm. It participates in lipid metabolism; fatty acid biosynthesis. Carrier of the growing fatty acid chain in fatty acid biosynthesis. This Helicobacter pylori (strain J99 / ATCC 700824) (Campylobacter pylori J99) protein is Acyl carrier protein.